The chain runs to 85 residues: Putative N.vectensis toxin 1 9 (85 aa).

The first 20 residues, 1–20 (MASFKIVIVCLALLVAVASA), serve as a signal peptide directing secretion. Residues 21 to 36 (RRRDMMSDDELDYHFS) constitute a propeptide that is removed on maturation. Cystine bridges form between C42–C82, C44–C72, and C65–C83.

This sequence belongs to the sea anemone sodium channel inhibitory toxin family. Type II subfamily. As to expression, expressed in ectodermal glands and in clumps outside of the extodermal layer. Is not expressed in nematocytes. In adult female tissues, shows similar expression levels in mesenteries (gametes-producing tissue), tentacles, pharynx and physa.

Its subcellular location is the secreted. Binds to site 3 of voltage-gated sodium channels and inhibits the inactivation process. Is highly active on DmNav1/TipE (drosophila) and is only extremely weakly active on rat Nav1.4-beta-1/SCN4A-SCN1B, and on human Nav1.5-beta-1/SCN5A-beta-1. This reveals high specificity for arthropod over mammalian channels. In vivo, when released into the medium, this recombinant toxin induces impaired swimming, paralysis and death of the crustacean A.nauplii within several hours. Also causes paralysis of cherry shrimps immediately after injection at very low doses. Its effect on zebrafish (D.rerio) larvae is also rapid, since it induces tail twitching accompanied by impaired swimming after 20 minutes and complete paralysis within 45 minutes. It has also been observed to cause death of zebrafish larvae within 1 hour. The chain is Putative N.vectensis toxin 1 9 from Nematostella vectensis (Starlet sea anemone).